The sequence spans 154 residues: Proline dehydrogenase transcriptional activator (154 aa).

One can recognise an HTH asnC-type domain in the interval 5-66 (IDATDRRILH…MLSPIRLGLI (62 aa)). Positions 24–43 (VTELARKVGLSKTPVAARIR) form a DNA-binding region, H-T-H motif.

Transcriptional activator of the putA gene in response to proline. This Rhodobacter capsulatus (Rhodopseudomonas capsulata) protein is Proline dehydrogenase transcriptional activator (putR).